Here is a 331-residue protein sequence, read N- to C-terminus: FMRFamide-related neuropeptides (331 aa).

A signal peptide spans 1–25 (MRCWSPCSLLVVIVIYCLSSHTSEA). The propeptide occupies 26 to 65 (FDLAQACVESQRLSLLPICDTIFAVQQEGAQQSADDGMRS). Residues F71 and F83 each carry the phenylalanine amide modification. A propeptide spanning residues 86 to 94 (NVPDLPFED) is cleaved from the precursor. F100 carries the phenylalanine amide modification. Residues 103-168 (AAPQLDDLLK…YIDDVEDSDV (66 aa)) constitute a propeptide that is removed on maturation. Positions 122 to 158 (QKADETSVRRKRSTDAAPQNNAENPEQKNDSAKITKR) are disordered. Over residues 146–158 (PEQKNDSAKITKR) the composition is skewed to basic and acidic residues. Phenylalanine amide occurs at positions 174 and 181. Positions 184 to 194 (NPSDAGNKLTE) are excised as a propeptide. A Phenylalanine amide modification is found at F200. Positions 203-205 (DPE) are excised as a propeptide. Phenylalanine amide is present on F211. Positions 214 to 216 (SDD) are excised as a propeptide. F222 carries the phenylalanine amide modification. The propeptide occupies 225 to 236 (NPSDVEDELEED). F242 is subject to Phenylalanine amide. Positions 245 to 254 (GGEDDEEEAE) are excised as a propeptide. F260 is modified (phenylalanine amide). A propeptide spanning residues 263–265 (DPE) is cleaved from the precursor. The residue at position 271 (F271) is a Phenylalanine amide. The propeptide occupies 274–277 (SGED). A compositionally biased stretch (basic and acidic residues) spans 282–296 (RFGRNPDEQEADKRF). Residues 282–310 (RFGRNPDEQEADKRFMRFGRGGEDDEVST) are disordered. F283 carries the post-translational modification Phenylalanine amide. Positions 286 to 293 (NPDEQEAD) are excised as a propeptide. Residue F299 is modified to Phenylalanine amide. Residues 302–312 (GGEDDEVSTED) constitute a propeptide that is removed on maturation. F318 carries the phenylalanine amide modification. A propeptide spanning residues 321–331 (SADKCKGCLEG) is cleaved from the precursor.

Belongs to the FARP (FMRFamide related peptide) family.

The protein localises to the secreted. Functionally, excitatory neurotransmitters that directly modulate chromatophore function by activating chromatophore expansion at the chromatophore neuromuscular junction. The protein is FMRFamide-related neuropeptides of Doryteuthis pealeii (Longfin inshore squid).